Consider the following 140-residue polypeptide: Protein E6 (140 aa).

Zinc fingers lie at residues 26–62 and 99–135; these read CNFCNYFLSNAEKLLFDHFDLHLVWRDNLVFGCCQGC and CVTCIKKLSVAEKLEVVSNGERVHRVRNRLKAKCSLC.

Belongs to the papillomaviridae E6 protein family. In terms of assembly, forms homodimers. Interacts with ubiquitin-protein ligase UBE3A/E6-AP; this interaction stimulates UBE3A ubiquitin activity. Interacts with host BAK1.

Its subcellular location is the host cytoplasm. It is found in the host nucleus. Its function is as follows. Plays a major role in the induction and maintenance of cellular transformation. E6 associates with host UBE3A/E6-AP ubiquitin-protein ligase and modulates its activity. Protects host keratinocytes from apoptosis by mediating the degradation of host BAK1. May also inhibit host immune response. This is Protein E6 from Human papillomavirus type 1 (Human papillomavirus type 1a).